The sequence spans 240 residues: Ribonuclease HII (240 aa).

In terms of domain architecture, RNase H type-2 spans 27–226; sequence GPVAGVDEAG…REARSLRLED (200 aa). The a divalent metal cation site is built by D33, E34, and D127.

It belongs to the RNase HII family. The cofactor is Mn(2+). It depends on Mg(2+) as a cofactor.

The protein resides in the cytoplasm. It catalyses the reaction Endonucleolytic cleavage to 5'-phosphomonoester.. Its function is as follows. Endonuclease that specifically degrades the RNA of RNA-DNA hybrids. In Frankia casuarinae (strain DSM 45818 / CECT 9043 / HFP020203 / CcI3), this protein is Ribonuclease HII.